The sequence spans 83 residues: U5-theraphotoxin-Hs1a 4 (83 aa).

The first 21 residues, 1–21 (MKTSMFLTLTGLVLLFVDCYA), serve as a signal peptide directing secretion. Positions 22-49 (SESEEKEFPKELLSSIFAADSDFKVEER) are excised as a propeptide. Intrachain disulfides connect Cys-51/Cys-63, Cys-56/Cys-68, and Cys-62/Cys-75.

Belongs to the neurotoxin 10 (Hwtx-1) family. 51 (Hntx-8) subfamily. Hntx-8 sub-subfamily. As to expression, expressed by the venom gland.

It localises to the secreted. Agglutinates erythrocytes. This is U5-theraphotoxin-Hs1a 4 from Cyriopagopus schmidti (Chinese bird spider).